We begin with the raw amino-acid sequence, 369 residues long: Fructose-bisphosphate aldolase 2 (369 aa).

Position 40 (aspartate 40) interacts with dihydroxyacetone phosphate. Residues serine 42 and threonine 45 each coordinate D-glyceraldehyde 3-phosphate. Position 49 (arginine 49) interacts with beta-D-fructose 1,6-bisphosphate. A D-glyceraldehyde 3-phosphate-binding site is contributed by lysine 113. Lysine 152 is a binding site for dihydroxyacetone phosphate. A D-glyceraldehyde 3-phosphate-binding site is contributed by glutamate 195. Glutamate 195 functions as the Proton acceptor in the catalytic mechanism. Positions 237, 279, and 280 each coordinate dihydroxyacetone phosphate. Residue lysine 237 is the Schiff-base intermediate with dihydroxyacetone phosphate of the active site. Residues 279–281 (SGG) and serine 307 each bind beta-D-fructose 1,6-bisphosphate. Dihydroxyacetone phosphate is bound by residues glycine 309 and arginine 310. Arginine 310 contributes to the beta-D-fructose 1,6-bisphosphate binding site.

Belongs to the class I fructose-bisphosphate aldolase family.

It localises to the cytoplasm. It is found in the membrane. Its subcellular location is the host cell membrane. It carries out the reaction beta-D-fructose 1,6-bisphosphate = D-glyceraldehyde 3-phosphate + dihydroxyacetone phosphate. It participates in carbohydrate degradation; glycolysis; D-glyceraldehyde 3-phosphate and glycerone phosphate from D-glucose: step 4/4. In terms of biological role, plays a key role in glycolysis by catalyzing the cleavage of fructose 1,6-bisphosphate into dihydroxyacetone phosphate and glyceraldehyde 3-phosphate. The chain is Fructose-bisphosphate aldolase 2 (ALDO2) from Plasmodium berghei (strain Anka).